Reading from the N-terminus, the 460-residue chain is Cysteine--tRNA ligase (460 aa).

Residue Cys28 coordinates Zn(2+). The 'HIGH' region signature appears at 30 to 40; that stretch reads VTIYDLCHIGH. Zn(2+) is bound by residues Cys209, His234, and Glu238. The 'KMSKS' region motif lies at 266–270; that stretch reads KMSKS. Lys269 is a binding site for ATP.

This sequence belongs to the class-I aminoacyl-tRNA synthetase family. Monomer. The cofactor is Zn(2+).

Its subcellular location is the cytoplasm. The enzyme catalyses tRNA(Cys) + L-cysteine + ATP = L-cysteinyl-tRNA(Cys) + AMP + diphosphate. The chain is Cysteine--tRNA ligase from Vibrio vulnificus (strain YJ016).